Consider the following 274-residue polypeptide: Large ribosomal subunit protein uL2cz/uL2cy (274 aa).

Disordered stretches follow at residues Met1–Asn25 and Asn224–Lys274.

This sequence belongs to the universal ribosomal protein uL2 family. Part of the 50S ribosomal subunit.

The protein localises to the plastid. Its subcellular location is the chloroplast. In Aethionema cordifolium (Lebanon stonecress), this protein is Large ribosomal subunit protein uL2cz/uL2cy (rpl2-A).